Reading from the N-terminus, the 1545-residue chain is Dual oxidase 2 (1545 aa).

The signal sequence occupies residues Met1–Gly25. Topologically, residues Gln26–Thr601 are extracellular. A peroxidase-like; mediates peroxidase activity region spans residues Ser30–Pro596. 6 N-linked (GlcNAc...) asparagine glycosylation sites follow: Asn100, Asn312, Asn348, Asn358, Asn455, and Asn549. A disulfide bridge connects residues Cys124 and Cys1159. The helical transmembrane segment at Ile602–Phe622 threads the bilayer. Residues Arg623 to Arg1037 lie on the Cytoplasmic side of the membrane. EF-hand domains follow at residues Pro819 to Gly854, Ser855 to Ile890, and Gln899 to Glu934. The Ca(2+) site is built by Asp832, Asp834, Asn836, Tyr838, Glu843, Asp868, Asp870, Asn872, and Glu879. The segment at Arg960 to Arg1242 is interaction with TXNDC11. Residues His1038 to Tyr1058 traverse the membrane as a helical segment. The Extracellular segment spans residues Tyr1059–Phe1074. A helical membrane pass occupies residues Val1075–Thr1097. One can recognise a Ferric oxidoreductase domain in the interval Arg1081–Ser1263. Residues Met1098 to Arg1125 lie on the Cytoplasmic side of the membrane. Residues Trp1126–Ile1148 traverse the membrane as a helical segment. At Phe1149–Gln1182 the chain is on the extracellular side. Residues Thr1183–Ala1203 traverse the membrane as a helical segment. Over Ser1204 to His1220 the chain is Cytoplasmic. The helical transmembrane segment at Phe1221–Pro1241 threads the bilayer. Residue Arg1242 is a topological domain, extracellular. The chain crosses the membrane as a helical span at residues Phe1243–Ser1263. The region spanning Arg1264–Glu1370 is the FAD-binding FR-type domain. Residues Arg1264–Phe1545 are Cytoplasmic-facing.

This sequence in the N-terminal section; belongs to the peroxidase family. As to quaternary structure, heterodimer with DUOXA2; disulfide-linked. Interacts with TXNDC11, TPO and CYBA. N-glycosylated. In terms of tissue distribution, expressed in thyroid, and the digestive tract especially in stomach, cecum and sigmoidal colon (at protein level). Expressed in thyroid.

The protein resides in the apical cell membrane. The protein localises to the cell junction. It carries out the reaction NADH + O2 + H(+) = H2O2 + NAD(+). The catalysed reaction is NADPH + O2 + H(+) = H2O2 + NADP(+). Its pathway is hormone biosynthesis; thyroid hormone biosynthesis. With respect to regulation, the NADPH oxidase activity is calcium-dependent. Peroxidase activity is inhibited by aminobenzohydrazide. In terms of biological role, generates hydrogen peroxide which is required for the activity of thyroid peroxidase/TPO and lactoperoxidase/LPO. Plays a role in thyroid hormones synthesis and lactoperoxidase-mediated antimicrobial defense at the surface of mucosa. May have its own peroxidase activity through its N-terminal peroxidase-like domain. This chain is Dual oxidase 2 (DUOX2), found in Sus scrofa (Pig).